The sequence spans 153 residues: ATP synthase subunit b' (153 aa).

The helical transmembrane segment at 23 to 40 (LMAIQVVALTYILNSLFF) threads the bilayer.

The protein belongs to the ATPase B chain family. F-type ATPases have 2 components, F(1) - the catalytic core - and F(0) - the membrane proton channel. F(1) has five subunits: alpha(3), beta(3), gamma(1), delta(1), epsilon(1). F(0) has four main subunits: a(1), b(1), b'(1) and c(10-14). The alpha and beta chains form an alternating ring which encloses part of the gamma chain. F(1) is attached to F(0) by a central stalk formed by the gamma and epsilon chains, while a peripheral stalk is formed by the delta, b and b' chains.

It localises to the cellular thylakoid membrane. Functionally, f(1)F(0) ATP synthase produces ATP from ADP in the presence of a proton or sodium gradient. F-type ATPases consist of two structural domains, F(1) containing the extramembraneous catalytic core and F(0) containing the membrane proton channel, linked together by a central stalk and a peripheral stalk. During catalysis, ATP synthesis in the catalytic domain of F(1) is coupled via a rotary mechanism of the central stalk subunits to proton translocation. Its function is as follows. Component of the F(0) channel, it forms part of the peripheral stalk, linking F(1) to F(0). The b'-subunit is a diverged and duplicated form of b found in plants and photosynthetic bacteria. The sequence is that of ATP synthase subunit b' from Prochlorococcus marinus (strain MIT 9515).